Here is a 303-residue protein sequence, read N- to C-terminus: Methionyl-tRNA formyltransferase (303 aa).

108 to 111 (SDLP) is a (6S)-5,6,7,8-tetrahydrofolate binding site.

The protein belongs to the Fmt family.

The catalysed reaction is L-methionyl-tRNA(fMet) + (6R)-10-formyltetrahydrofolate = N-formyl-L-methionyl-tRNA(fMet) + (6S)-5,6,7,8-tetrahydrofolate + H(+). Functionally, attaches a formyl group to the free amino group of methionyl-tRNA(fMet). The formyl group appears to play a dual role in the initiator identity of N-formylmethionyl-tRNA by promoting its recognition by IF2 and preventing the misappropriation of this tRNA by the elongation apparatus. This Rickettsia felis (strain ATCC VR-1525 / URRWXCal2) (Rickettsia azadi) protein is Methionyl-tRNA formyltransferase.